The chain runs to 970 residues: Isoleucine--tRNA ligase (970 aa).

The 'HIGH' region motif lies at Pro65–His75. An L-isoleucyl-5'-AMP-binding site is contributed by Glu608. The short motif at Lys649 to Ser653 is the 'KMSKS' region element. Lys652 contributes to the ATP binding site. Zn(2+) contacts are provided by Cys943, Cys946, Cys962, and Cys965.

This sequence belongs to the class-I aminoacyl-tRNA synthetase family. IleS type 1 subfamily. As to quaternary structure, monomer. It depends on Zn(2+) as a cofactor.

It is found in the cytoplasm. It carries out the reaction tRNA(Ile) + L-isoleucine + ATP = L-isoleucyl-tRNA(Ile) + AMP + diphosphate. In terms of biological role, catalyzes the attachment of isoleucine to tRNA(Ile). As IleRS can inadvertently accommodate and process structurally similar amino acids such as valine, to avoid such errors it has two additional distinct tRNA(Ile)-dependent editing activities. One activity is designated as 'pretransfer' editing and involves the hydrolysis of activated Val-AMP. The other activity is designated 'posttransfer' editing and involves deacylation of mischarged Val-tRNA(Ile). The polypeptide is Isoleucine--tRNA ligase (Ruegeria pomeroyi (strain ATCC 700808 / DSM 15171 / DSS-3) (Silicibacter pomeroyi)).